Here is a 164-residue protein sequence, read N- to C-terminus: Large ribosomal subunit protein bL19 (164 aa).

The disordered stretch occupies residues 144–164; the sequence is EAEKQTEVQAEPKIEKSEEKK.

Belongs to the bacterial ribosomal protein bL19 family.

In terms of biological role, this protein is located at the 30S-50S ribosomal subunit interface and may play a role in the structure and function of the aminoacyl-tRNA binding site. The chain is Large ribosomal subunit protein bL19 from Pelagibacter ubique (strain HTCC1062).